A 253-amino-acid polypeptide reads, in one-letter code: Ribosome maturation protein SBDS (253 aa).

The protein belongs to the SDO1/SBDS family. Associates with the 60S ribosomal subunit.

It is found in the cytoplasm. The protein localises to the nucleus. Its subcellular location is the nucleolus. It localises to the nucleoplasm. The protein resides in the cytoskeleton. It is found in the spindle. Required for the assembly of mature ribosomes and ribosome biogenesis. Together with K10C3.5b/EFL1, triggers the GTP-dependent release of ribosome maturation factors from 60S pre-ribosomes in the cytoplasm, thereby activating ribosomes for translation competence by allowing 80S ribosome assembly. Required for normal levels of protein synthesis. May play a role in cellular stress resistance. May play a role in cellular response to DNA damage. May play a role in cell proliferation. This chain is Ribosome maturation protein SBDS (sbds-1), found in Caenorhabditis elegans.